Reading from the N-terminus, the 201-residue chain is Guanylate kinase (201 aa).

One can recognise a Guanylate kinase-like domain in the interval 7–186; it reads GVLLVLSSPS…SVEEISSILN (180 aa). 14 to 21 contacts ATP; the sequence is SPSGAGKT.

It belongs to the guanylate kinase family.

The protein localises to the cytoplasm. It catalyses the reaction GMP + ATP = GDP + ADP. Its function is as follows. Essential for recycling GMP and indirectly, cGMP. The sequence is that of Guanylate kinase from Wolbachia pipientis wMel.